A 514-amino-acid chain; its full sequence is Beta-galactoside alpha-2,6-sialyltransferase 2 (514 aa).

The Cytoplasmic portion of the chain corresponds to 1–10 (MKSSLKQWRR). Residues 11–31 (LALGLILVWALLFLALLSYFM) form a helical; Signal-anchor for type II membrane protein membrane-spanning segment. The Lumenal portion of the chain corresponds to 32–514 (ESRVDDPHAA…PGFNKVHCEP (483 aa)). The span at 70 to 92 (ATSSAPSTSSNTQQEQSQEENPS) shows a compositional bias: low complexity. A disordered region spans residues 70–183 (ATSSAPSTSS…TKRVARHGSS (114 aa)). A compositionally biased stretch (polar residues) spans 119-132 (FGTQDVGSRSTGVS). The segment covering 145-166 (PQEDEDEEEEVIGGEEEDEEGG) has biased composition (acidic residues). 3 disulfide bridges follow: Cys-246–Cys-512, Cys-289–Cys-441, and Cys-459–Cys-470. N-linked (GlcNAc...) asparagine glycans are attached at residues Asn-330, Asn-350, and Asn-357.

It belongs to the glycosyltransferase 29 family.

The protein resides in the golgi apparatus. Its subcellular location is the golgi stack membrane. It catalyses the reaction a beta-D-galactoside + CMP-N-acetyl-beta-neuraminate = an N-acetyl-alpha-neuraminyl-(2-&gt;6)-beta-D-galactosyl derivative + CMP + H(+). Transfers sialic acid from the donor of substrate CMP-sialic acid to galactose containing acceptor substrates. This chain is Beta-galactoside alpha-2,6-sialyltransferase 2 (st6gal2), found in Danio rerio (Zebrafish).